The primary structure comprises 487 residues: Homeobox protein homothorax (487 aa).

3 disordered regions span residues 25 to 49 (YDPH…HMTH), 210 to 292 (DTTK…SSLN), and 333 to 369 (NFGT…QKKR). The MEIS N-terminal domain maps to 127 to 211 (GGDVCSSESF…IDLVIDERDT (85 aa)). Composition is skewed to polar residues over residues 227 to 237 (NADSTSHTDGA) and 333 to 345 (NFGT…ASNA). The homeobox; TALE-type DNA-binding region spans 365–427 (NQKKRGIFPK…NARRRIVQPM (63 aa)).

It belongs to the TALE/MEIS homeobox family. In terms of assembly, interacts with exd; required for nuclear translocation of exd. In terms of tissue distribution, in the wing disk, the expression is present in the regions corresponding to notum, wing hinge and ventral pleura. In the leg disk, the expression is in the periphery region, corresponding to the proximal segments of the legs. In the antennal disk, the expression is in all but the arista region. In the eye disk, the expression is strong in the anterior region surrounding the eye field, including the regions corresponding to ptilinum, ocellus and head capsules, and weak in the posterior and lateral margins of the eye disk. Expressed specifically in maturating inner photoreceptors of the DRA and maintained through adulthood.

The protein resides in the nucleus. All isoforms are required for patterning of the embryonic cuticle. Acts with exd to delimit the eye field and prevent inappropriate eye development. Isoforms that carry the homeodomain are required for proper localization of chordotonal organs within the peripheral nervous system and antennal identity; required to activate antennal-specific genes, such as sal and to repress the leg-like expression of dac. Necessary for the nuclear localization of the essential HOX cofactor, extradenticle (exd). Both necessary and sufficient for inner photoreceptors to adopt the polarization-sensitive 'dorsal rim area' (DRA) of the eye fate instead of the color-sensitive default state. This occurs by increasing rhabdomere size and uncoupling R7-R8 communication to allow both cells to express the same opsin rather than different ones as required for color vision. The chain is Homeobox protein homothorax from Drosophila melanogaster (Fruit fly).